Here is a 383-residue protein sequence, read N- to C-terminus: 6-hydroxynicotinate 3-monooxygenase (383 aa).

The N-terminal stretch at 1–26 is a signal peptide; sequence MQGKPRIAVIGAGLGGTAGAALMARA. FAD contacts are provided by residues Gly-15, 34 to 35, His-47, Arg-108, and Leu-130; that span reads EQ. His-47 functions as the Proton acceptor in the catalytic mechanism. Tyr-214 acts as the Proton acceptor in catalysis. FAD contacts are provided by residues Asp-293 and 306–307; that span reads AA.

Belongs to the 6-hydroxynicotinate 3-monooxygenase family. In terms of assembly, monomer. It depends on FAD as a cofactor.

It carries out the reaction 6-hydroxynicotinate + NADH + O2 + 2 H(+) = 2,5-dihydroxypyridine + CO2 + NAD(+) + H2O. Its pathway is cofactor degradation; nicotinate degradation. Its activity is regulated as follows. Competitively inhibited by 6-hydroxynicotinaldehyde. In terms of biological role, flavin-dependent monooxygenase (FMO) that catalyzes the decarboxylative hydroxylation of 6-hydroxynicotinic acid (6-HNA) to 2,5-dihydroxypyridine (2,5-DHP) with concomitant oxidation of NADH, a step in the aerobic nicotinate degradation pathway. Is also active on the non-natural substrate 5-chloro-6-hydroxynicotinate, and is much less efficient on the substrate analog 4-hydroxybenzoate. The polypeptide is 6-hydroxynicotinate 3-monooxygenase (Bordetella bronchiseptica (strain ATCC BAA-588 / NCTC 13252 / RB50) (Alcaligenes bronchisepticus)).